A 269-amino-acid chain; its full sequence is Putative pyridoxine kinase (269 aa).

ATP is bound at residue Asn-139. Position 142 (Glu-142) interacts with Mg(2+). Residues 176 to 180 (KGGGR), Asp-189, Val-205, Gly-214, and Lys-239 each bind ATP.

It belongs to the ThiD family.

It catalyses the reaction pyridoxal + ATP = pyridoxal 5'-phosphate + ADP + H(+). In terms of biological role, phosphorylates B6 vitamers; functions in a salvage pathway. Uses pyridoxal, pyridoxine, and pyridoxamine as substrates. This chain is Putative pyridoxine kinase (pdxK), found in Treponema pallidum (strain Nichols).